Here is a 263-residue protein sequence, read N- to C-terminus: Endonuclease 8 (263 aa).

The active-site Schiff-base intermediate with DNA is the proline 2. Glutamate 3 (proton donor) is an active-site residue. Lysine 53 serves as the catalytic Proton donor; for beta-elimination activity. DNA contacts are provided by glutamine 70, arginine 125, and asparagine 169. The segment at 229–263 (KVFHRDGEVCERCGGIIEKTTLSSRPFYWCPHCQK) adopts an FPG-type zinc-finger fold. The active-site Proton donor; for delta-elimination activity is the arginine 253.

The protein belongs to the FPG family. Zn(2+) serves as cofactor.

It carries out the reaction 2'-deoxyribonucleotide-(2'-deoxyribose 5'-phosphate)-2'-deoxyribonucleotide-DNA = a 3'-end 2'-deoxyribonucleotide-(2,3-dehydro-2,3-deoxyribose 5'-phosphate)-DNA + a 5'-end 5'-phospho-2'-deoxyribonucleoside-DNA + H(+). Its function is as follows. Involved in base excision repair of DNA damaged by oxidation or by mutagenic agents. Acts as a DNA glycosylase that recognizes and removes damaged bases. Has a preference for oxidized pyrimidines, such as thymine glycol, 5,6-dihydrouracil and 5,6-dihydrothymine. Has AP (apurinic/apyrimidinic) lyase activity and introduces nicks in the DNA strand. Cleaves the DNA backbone by beta-delta elimination to generate a single-strand break at the site of the removed base with both 3'- and 5'-phosphates. The chain is Endonuclease 8 from Salmonella newport (strain SL254).